Reading from the N-terminus, the 160-residue chain is S-adenosylmethionine decarboxylase proenzyme (160 aa).

The Schiff-base intermediate with substrate; via pyruvic acid role is filled by Ser73. Residue Ser73 is modified to Pyruvic acid (Ser); by autocatalysis. His78 acts as the Proton acceptor; for processing activity in catalysis. The active-site Proton donor; for catalytic activity is the Cys93.

Belongs to the prokaryotic AdoMetDC family. Type 1 subfamily. Heterotetramer of two alpha and two beta chains arranged as a dimer of alpha/beta heterodimers. It depends on pyruvate as a cofactor. Post-translationally, is synthesized initially as an inactive proenzyme. Formation of the active enzyme involves a self-maturation process in which the active site pyruvoyl group is generated from an internal serine residue via an autocatalytic post-translational modification. Two non-identical subunits are generated from the proenzyme in this reaction, and the pyruvate is formed at the N-terminus of the alpha chain, which is derived from the carboxyl end of the proenzyme. The post-translation cleavage follows an unusual pathway, termed non-hydrolytic serinolysis, in which the side chain hydroxyl group of the serine supplies its oxygen atom to form the C-terminus of the beta chain, while the remainder of the serine residue undergoes an oxidative deamination to produce ammonia and the pyruvoyl group blocking the N-terminus of the alpha chain.

It carries out the reaction S-adenosyl-L-methionine + H(+) = S-adenosyl 3-(methylsulfanyl)propylamine + CO2. It functions in the pathway amine and polyamine biosynthesis; S-adenosylmethioninamine biosynthesis; S-adenosylmethioninamine from S-adenosyl-L-methionine: step 1/1. Catalyzes the decarboxylation of S-adenosylmethionine to S-adenosylmethioninamine (dcAdoMet), the propylamine donor required for the synthesis of the polyamines spermine and spermidine from the diamine putrescine. The chain is S-adenosylmethionine decarboxylase proenzyme from Pseudomonas aeruginosa (strain LESB58).